The sequence spans 485 residues: NADH-quinone oxidoreductase subunit N (485 aa).

14 helical membrane passes run 8-28, 35-55, 71-91, 105-125, 127-147, 159-179, 203-223, 235-255, 271-291, 297-317, 326-346, 373-393, 408-430, and 455-475; these read LIALLPLLIVGLTVVVVMLSI, FLNATLSVIGLNAALVSLWFV, GFAMLYTGLVLLASLATCTFA, FYLLVLIAALGGILLANANHL, SLFLGIELISLPLFGLVGYAF, YTILSAAASSFLLFGMALVYA, LLAGFGLMIVGLGFKLSLVPF, PAPVSTFLATASKIAIFGVVM, VVLAIIAFASIIFGNLMALSQ, LLGYSSISHLGYLLVALIALQ, VGVYLAGYLFSSLGAFGVVSL, AAVMTVMMLSLAGIPMTLGFI, WWLVGAVVVGSAIGLYYYLRVAV, and IVVLISALLVLVLGVWPQPLI.

This sequence belongs to the complex I subunit 2 family. In terms of assembly, NDH-1 is composed of 13 different subunits. Subunits NuoA, H, J, K, L, M, N constitute the membrane sector of the complex.

The protein localises to the cell inner membrane. It catalyses the reaction a quinone + NADH + 5 H(+)(in) = a quinol + NAD(+) + 4 H(+)(out). In terms of biological role, NDH-1 shuttles electrons from NADH, via FMN and iron-sulfur (Fe-S) centers, to quinones in the respiratory chain. The immediate electron acceptor for the enzyme in this species is believed to be ubiquinone. Couples the redox reaction to proton translocation (for every two electrons transferred, four hydrogen ions are translocated across the cytoplasmic membrane), and thus conserves the redox energy in a proton gradient. In Escherichia coli (strain ATCC 8739 / DSM 1576 / NBRC 3972 / NCIMB 8545 / WDCM 00012 / Crooks), this protein is NADH-quinone oxidoreductase subunit N.